A 390-amino-acid polypeptide reads, in one-letter code: Phosphopentomutase (390 aa).

Mn(2+) is bound by residues D11, D283, H288, D324, H325, and H336.

It belongs to the phosphopentomutase family. Mn(2+) serves as cofactor.

It is found in the cytoplasm. The enzyme catalyses 2-deoxy-alpha-D-ribose 1-phosphate = 2-deoxy-D-ribose 5-phosphate. It carries out the reaction alpha-D-ribose 1-phosphate = D-ribose 5-phosphate. Its pathway is carbohydrate degradation; 2-deoxy-D-ribose 1-phosphate degradation; D-glyceraldehyde 3-phosphate and acetaldehyde from 2-deoxy-alpha-D-ribose 1-phosphate: step 1/2. Its function is as follows. Isomerase that catalyzes the conversion of deoxy-ribose 1-phosphate (dRib-1-P) and ribose 1-phosphate (Rib-1-P) to deoxy-ribose 5-phosphate (dRib-5-P) and ribose 5-phosphate (Rib-5-P), respectively. The sequence is that of Phosphopentomutase from Clostridium novyi (strain NT).